Reading from the N-terminus, the 130-residue chain is Sigma-w pathway protein YsdB (130 aa).

The chain crosses the membrane as a helical span at residues 2–22; that stretch reads FVMVLRIILLALFAYCIYAVV.

Its subcellular location is the membrane. Its function is as follows. May mediate a negative feedback loop that down-regulates the expression of the sigma-W regulon following the activation of sigma-W in response to conditions of cell envelope stress. Might interact with and inhibit the activity of the protease PrsW, or could bind to the anti-sigma-W factor RsiW and thereby protect it from PrsW-mediated cleavage. This is Sigma-w pathway protein YsdB (ysdB) from Bacillus subtilis (strain 168).